A 587-amino-acid polypeptide reads, in one-letter code: MDSGQPWFPKIHTKEVRRRLSSLNIATPSSSPCNMNWQSLEPKHIINDNVYGTVKVPRPIDKLIDTVEFQRLRHLKQTGLVYLVYPNCEHSRFVHSLGTFSLAYALVDKLRHSQPSLNITESDLICTSVAALLHDVGHGPFSHLFDGEFAKRNGSRFKHEDMSILIIKKIMNKPEIKSEFACILGETDEEYAKSVTLITELISGKPFDFQDMDGFKDLPADVREETVKNEWAIIGCGPEKSFLFDVVSNSYNGHDVDKMDYLLRDSKASGVGITFSESTLERLFNHVRVVIDPNSGLKRIAYSIKCIGDLKAIGDSRQELHSKVYQHKAVRFMETLMVDALINAGDFLKYKGSNGELYSLKNVTEDVDAFLKTTDYVEQEILNSQITDPKMIEAQTALLKIQRREIGCKLGYFEMNPENATQLKGNCNNQTGAAEVVKKVGQKMKEILEQMDDTEEMDGKLKDIQFTVMHSVLGRGLDDKTHPIERQIFYDGKPSEHEGKQVVGFYPSEDYVINNCPRMATKWEIFVMGDRSLRKEPLLADRVKRALQLAGESEKFLTPRKRSPQDSPDEVSSSCSTAKRRLEFGSS.

One can recognise an HD domain in the interval 92–262 (RFVHSLGTFS…GHDVDKMDYL (171 aa)). 4 residues coordinate Zn(2+): histidine 95, histidine 134, aspartate 135, and aspartate 257. The interval 554-587 (EKFLTPRKRSPQDSPDEVSSSCSTAKRRLEFGSS) is disordered. Residue threonine 558 is modified to Phosphothreonine.

The protein belongs to the SAMHD1 family. Homodimer. Homotetramer; in dGTP-bound form. Requires Zn(2+) as cofactor.

Its subcellular location is the nucleus. The protein resides in the chromosome. The catalysed reaction is a 2'-deoxyribonucleoside 5'-triphosphate + H2O = a 2'-deoxyribonucleoside + triphosphate + H(+). With respect to regulation, allosterically activated and regulated by GTP or dGTP. Allosteric activation promotes the formation of highly active homotetramers. Phosphorylation impairs homotetramerization, thereby inhibiting dNTPase activity. Functionally, has deoxynucleoside triphosphate (dNTPase) activity. dNTPase activity acts as a regulator of DNA precursor pools by regulating dNTP pools. Phosphorylation acts as a switch to control dNTPase-dependent and -independent functions. The protein is Deoxynucleoside triphosphate triphosphohydrolase sahd-1 of Caenorhabditis elegans.